Here is a 235-residue protein sequence, read N- to C-terminus: Phosphoglycolate phosphatase (235 aa).

Catalysis depends on Asp14, which acts as the Nucleophile. 3 residues coordinate Mg(2+): Asp14, Asp16, and Asp177.

This sequence belongs to the HAD-like hydrolase superfamily. CbbY/CbbZ/Gph/YieH family. Mg(2+) serves as cofactor.

The catalysed reaction is 2-phosphoglycolate + H2O = glycolate + phosphate. It functions in the pathway organic acid metabolism; glycolate biosynthesis; glycolate from 2-phosphoglycolate: step 1/1. In terms of biological role, specifically catalyzes the dephosphorylation of 2-phosphoglycolate. Is involved in the dissimilation of the intracellular 2-phosphoglycolate formed during the DNA repair of 3'-phosphoglycolate ends, a major class of DNA lesions induced by oxidative stress. In Neisseria meningitidis serogroup A / serotype 4A (strain DSM 15465 / Z2491), this protein is Phosphoglycolate phosphatase.